Reading from the N-terminus, the 142-residue chain is Large ribosomal subunit protein uL13 (142 aa).

The protein belongs to the universal ribosomal protein uL13 family. Part of the 50S ribosomal subunit.

Functionally, this protein is one of the early assembly proteins of the 50S ribosomal subunit, although it is not seen to bind rRNA by itself. It is important during the early stages of 50S assembly. The protein is Large ribosomal subunit protein uL13 of Hamiltonella defensa subsp. Acyrthosiphon pisum (strain 5AT).